The sequence spans 450 residues: tRNA modification GTPase MnmE (450 aa).

3 residues coordinate (6S)-5-formyl-5,6,7,8-tetrahydrofolate: R23, E80, and R123. Residues G219 to G372 form the TrmE-type G domain. Position 229 (N229) interacts with K(+). GTP is bound by residues N229–S234, T248–T254, and D273–G276. Residue S233 coordinates Mg(2+). The K(+) site is built by T248, I250, and T253. Mg(2+) is bound at residue T254. K450 is a binding site for (6S)-5-formyl-5,6,7,8-tetrahydrofolate.

Belongs to the TRAFAC class TrmE-Era-EngA-EngB-Septin-like GTPase superfamily. TrmE GTPase family. Homodimer. Heterotetramer of two MnmE and two MnmG subunits. Requires K(+) as cofactor.

The protein resides in the cytoplasm. Functionally, exhibits a very high intrinsic GTPase hydrolysis rate. Involved in the addition of a carboxymethylaminomethyl (cmnm) group at the wobble position (U34) of certain tRNAs, forming tRNA-cmnm(5)s(2)U34. This is tRNA modification GTPase MnmE from Bordetella avium (strain 197N).